Reading from the N-terminus, the 152-residue chain is Xanthine-guanine phosphoribosyltransferase (152 aa).

Residues 37-38 (RG) and 88-96 (DDLVDTGGT) each bind 5-phospho-alpha-D-ribose 1-diphosphate. Residue Asp-89 coordinates Mg(2+). Guanine is bound by residues Asp-92 and Ile-135. Residues Asp-92 and Ile-135 each coordinate xanthine. GMP is bound by residues 92 to 96 (DTGGT) and 134 to 135 (WI).

It belongs to the purine/pyrimidine phosphoribosyltransferase family. XGPT subfamily. As to quaternary structure, homotetramer. Mg(2+) is required as a cofactor.

Its subcellular location is the cell inner membrane. The catalysed reaction is GMP + diphosphate = guanine + 5-phospho-alpha-D-ribose 1-diphosphate. It catalyses the reaction XMP + diphosphate = xanthine + 5-phospho-alpha-D-ribose 1-diphosphate. It carries out the reaction IMP + diphosphate = hypoxanthine + 5-phospho-alpha-D-ribose 1-diphosphate. The protein operates within purine metabolism; GMP biosynthesis via salvage pathway; GMP from guanine: step 1/1. Its pathway is purine metabolism; XMP biosynthesis via salvage pathway; XMP from xanthine: step 1/1. Purine salvage pathway enzyme that catalyzes the transfer of the ribosyl-5-phosphate group from 5-phospho-alpha-D-ribose 1-diphosphate (PRPP) to the N9 position of the 6-oxopurines guanine and xanthine to form the corresponding ribonucleotides GMP (guanosine 5'-monophosphate) and XMP (xanthosine 5'-monophosphate), with the release of PPi. To a lesser extent, also acts on hypoxanthine. The chain is Xanthine-guanine phosphoribosyltransferase from Yersinia enterocolitica serotype O:8 / biotype 1B (strain NCTC 13174 / 8081).